A 122-amino-acid polypeptide reads, in one-letter code: uncharacterized protein (122 aa).

This is an uncharacterized protein from Escherichia coli O157:H7.